The primary structure comprises 756 residues: Inhibitor of nuclear factor kappa-B kinase subunit beta (756 aa).

Residues 15-300 (WEMKERLGTG…DPVYGPNGCF (286 aa)) form the Protein kinase domain. ATP-binding positions include 21 to 29 (LGTGGFGNV) and Lys-44. The Proton acceptor role is filled by Asp-145. Lys-163 participates in a covalent cross-link: Glycyl lysine isopeptide (Lys-Gly) (interchain with G-Cter in ubiquitin). Ser-177 bears the Phosphoserine; by TBK1 and PKC/PRKCZ mark. Cys-179 carries the S-nitrosocysteine modification. Ser-181 is modified (phosphoserine; by TBK1, PKC/PRKCZ and PDPK1). A Hydroxyproline modification is found at Pro-191. A leucine-zipper region spans residues 458 to 479 (LLRNNSCLSKMKNSMASMSQQL). A phosphoserine; by autocatalysis mark is found at Ser-670, Ser-672, Ser-675, Ser-682, Ser-689, Ser-697, Ser-705, Ser-733, and Ser-740. Positions 737 to 742 (LDWSWL) are NEMO-binding.

The protein belongs to the protein kinase superfamily. Ser/Thr protein kinase family. I-kappa-B kinase subfamily. In terms of assembly, component of the I-kappa-B-kinase (IKK) core complex consisting of CHUK, IKBKB and IKBKG; probably four alpha/CHUK-beta/IKBKB dimers are associated with four gamma/IKBKG subunits. The IKK core complex seems to associate with regulatory or adapter proteins to form a IKK-signalosome holo-complex. The IKK complex associates with TERF2IP/RAP1, leading to promote IKK-mediated phosphorylation of RELA/p65. Part of a complex composed of NCOA2, NCOA3, CHUK/IKKA, IKBKB, IKBKG and CREBBP. Part of a 70-90 kDa complex at least consisting of CHUK/IKKA, IKBKB, NFKBIA, RELA, ELP1 and MAP3K14. Found in a membrane raft complex, at least composed of BCL10, CARD11, DPP4 and IKBKB. Interacts with SQSTM1 through PRKCZ or PRKCI. Forms an NGF-induced complex with IKBKB, PRKCI and TRAF6. May interact with MAVS/IPS1. Interacts with NALP2. Interacts with TICAM1. Interacts with FAF1; the interaction disrupts the IKK complex formation. Interacts with ATM. Part of a ternary complex consisting of TANK, IKBKB and IKBKG. Interacts with NIBP; the interaction is direct. Interacts with ARRB1 and ARRB2. Interacts with TRIM21. Interacts with NLRC5; prevents IKBKB phosphorylation and kinase activity. Interacts with PDPK1. Interacts with EIF2AK2/PKR. The phosphorylated form interacts with PPM1A and PPM1B. Interacts with ZNF268; the interaction is further increased in a TNF-alpha-dependent manner. Interacts with IKBKE. Interacts with ZC3H12A. Interacts with AKAP13. Interacts with IFIT5; the interaction synergizes the recruitment of IKK to MAP3K7 and enhances IKK phosphorylation. Interacts with LRRC14; disrupts IKBKB-IKBKG interaction preventing I-kappa-B-kinase (IKK) core complex formation and leading to a decrease of IKBKB phosphorylation and NF-kappaB activation. Interacts with SASH1. Interacts with ARFIP2. Interacts with FKBP5. Upon cytokine stimulation, phosphorylated on Ser-177 and Ser-181 by MEKK1 and/or MAP3K14/NIK as well as TBK1 and PRKCZ; which enhances activity. Phosphorylated by MAP3K7/TAK1 in response to NOD1 and NOD2 signaling, promoting activation and phosphorylation of NF-kappa-B inhibitors, leading to NF-kappa-B activation. Once activated, autophosphorylates on the C-terminal serine cluster; which decreases activity and prevents prolonged activation of the inflammatory response. Phosphorylated by the IKK-related kinases TBK1 and IKBKE, which is associated with reduced CHUK/IKKA and IKBKB activity and NF-kappa-B-dependent gene transcription. Dephosphorylated at Ser-177 and Ser-181 by PPM1A and PPM1B. Post-translationally, ubiquitinated. Monoubiquitination involves TRIM21 that leads to inhibition of Tax-induced NF-kappa-B signaling. 'Ser-163' may not serve as a monoubiquitination site. Ubiquitination on 'Ser-163' may modulate phosphorylation on C-terminal serine residues. In terms of processing, hydroxylated by PHD1/EGLN2, loss of hydroxylation under hypoxic conditions results in activation of NF-kappa-B.

It is found in the cytoplasm. The protein resides in the nucleus. The protein localises to the membrane raft. It catalyses the reaction L-seryl-[I-kappa-B protein] + ATP = O-phospho-L-seryl-[I-kappa-B protein] + ADP + H(+). The enzyme catalyses L-seryl-[protein] + ATP = O-phospho-L-seryl-[protein] + ADP + H(+). It carries out the reaction L-threonyl-[protein] + ATP = O-phospho-L-threonyl-[protein] + ADP + H(+). Functionally, serine kinase that plays an essential role in the NF-kappa-B signaling pathway which is activated by multiple stimuli such as inflammatory cytokines, bacterial or viral products, DNA damages or other cellular stresses. Acts as a part of the canonical IKK complex in the conventional pathway of NF-kappa-B activation. Phosphorylates inhibitors of NF-kappa-B on 2 critical serine residues. These modifications allow polyubiquitination of the inhibitors and subsequent degradation by the proteasome. In turn, free NF-kappa-B is translocated into the nucleus and activates the transcription of hundreds of genes involved in immune response, growth control, or protection against apoptosis. In addition to the NF-kappa-B inhibitors, phosphorylates several other components of the signaling pathway including NEMO/IKBKG, NF-kappa-B subunits RELA and NFKB1, as well as IKK-related kinases TBK1 and IKBKE. IKK-related kinase phosphorylations may prevent the overproduction of inflammatory mediators since they exert a negative regulation on canonical IKKs. Phosphorylates FOXO3, mediating the TNF-dependent inactivation of this pro-apoptotic transcription factor. Also phosphorylates other substrates including NAA10, NCOA3, BCL10 and IRS1. Phosphorylates RIPK1 at 'Ser-25' which represses its kinase activity and consequently prevents TNF-mediated RIPK1-dependent cell death. Phosphorylates the C-terminus of IRF5, stimulating IRF5 homodimerization and translocation into the nucleus. The protein is Inhibitor of nuclear factor kappa-B kinase subunit beta (IKBKB) of Bos taurus (Bovine).